The sequence spans 117 residues: Probable glycerol dehydratase-reactivating factor small subunit (117 aa).

Glu-31 is a Mg(2+) binding site.

The protein belongs to the DdrB/PduH family. Member of the GDR complex, probably composed of DhaF(2)/DhaG(2). Mg(2+) is required as a cofactor.

Functionally, small subunit of the glycerol dehydratase-reactivating factor (GDR), which reactivates suicidally inhibited adenosylcobalamin-dependent glycerol dehydratase. The polypeptide is Probable glycerol dehydratase-reactivating factor small subunit (Citrobacter freundii).